The chain runs to 83 residues: Small ribosomal subunit protein bS16 (83 aa).

Belongs to the bacterial ribosomal protein bS16 family.

The sequence is that of Small ribosomal subunit protein bS16 from Chromobacterium violaceum (strain ATCC 12472 / DSM 30191 / JCM 1249 / CCUG 213 / NBRC 12614 / NCIMB 9131 / NCTC 9757 / MK).